Here is a 415-residue protein sequence, read N- to C-terminus: MSILSQFDPAVAEAIQHETERQEYNLELIASENFVSEAVLEAQGSVMTNKYAEGYPGKRYYGGCHHVDVVENLAIERAKELFGAEHANVQPHAGSQANMAVYNAVCQPGDTILGMNLSHGGHLTHGSPVNFSGRFYNVVPYGVSPDTETIDYNEVERLALEHKPKMIVVGASAYPRIIDFPAFRAIADKVGAKVMVDMAHIAGLVAAGVHPNPVPYAEFVTTTTHKTLRGPRGGMILCREEYAKTINSQIFPGIQGGPLMHVIAAKAVAFKEALQPEFKTYQQQIVKNAAKLAECLMAKGFKLTSGGTDNHLMLINFTGTEITGKAAEEALDKAGITVNKNTVPFETRSPFVTSGIRVGTPACTSHGLKETEMEQVAGFIADAVANIGNDEALAAIQKRVNELMKKFPLYASRLK.

(6S)-5,6,7,8-tetrahydrofolate contacts are provided by residues Leu117 and 121–123; that span reads GHL. An N6-(pyridoxal phosphate)lysine modification is found at Lys226. (6S)-5,6,7,8-tetrahydrofolate is bound by residues Glu241 and 349 to 351; that span reads SPF.

It belongs to the SHMT family. Homodimer. It depends on pyridoxal 5'-phosphate as a cofactor.

It localises to the cytoplasm. The enzyme catalyses (6R)-5,10-methylene-5,6,7,8-tetrahydrofolate + glycine + H2O = (6S)-5,6,7,8-tetrahydrofolate + L-serine. It functions in the pathway one-carbon metabolism; tetrahydrofolate interconversion. The protein operates within amino-acid biosynthesis; glycine biosynthesis; glycine from L-serine: step 1/1. Its function is as follows. Catalyzes the reversible interconversion of serine and glycine with tetrahydrofolate (THF) serving as the one-carbon carrier. This reaction serves as the major source of one-carbon groups required for the biosynthesis of purines, thymidylate, methionine, and other important biomolecules. Also exhibits THF-independent aldolase activity toward beta-hydroxyamino acids, producing glycine and aldehydes, via a retro-aldol mechanism. The protein is Serine hydroxymethyltransferase of Trichlorobacter lovleyi (strain ATCC BAA-1151 / DSM 17278 / SZ) (Geobacter lovleyi).